The primary structure comprises 481 residues: Bifunctional protein GlmU (481 aa).

Residues 1–235 (MTHKERPLDV…PDEVMGANDR (235 aa)) form a pyrophosphorylase region. UDP-N-acetyl-alpha-D-glucosamine contacts are provided by residues 13 to 16 (LAAG), Lys27, Gln78, 83 to 84 (GT), 107 to 109 (YGD), Gly146, Glu161, Asn176, and Asn233. Asp109 serves as a coordination point for Mg(2+). Asn233 is a binding site for Mg(2+). Positions 236–256 (VQLAQAAAVLRRRINTAHMQA) are linker. The interval 257–481 (GVTLQDPSTI…PWLAGWLERQ (225 aa)) is N-acetyltransferase. The UDP-N-acetyl-alpha-D-glucosamine site is built by Arg339 and Lys357. The Proton acceptor role is filled by His369. Residues Tyr372 and Asn383 each coordinate UDP-N-acetyl-alpha-D-glucosamine. Acetyl-CoA contacts are provided by Ala386, Ser411, Ala429, and Arg446.

In the N-terminal section; belongs to the N-acetylglucosamine-1-phosphate uridyltransferase family. The protein in the C-terminal section; belongs to the transferase hexapeptide repeat family. Homotrimer. Mg(2+) is required as a cofactor.

The protein localises to the cytoplasm. It catalyses the reaction alpha-D-glucosamine 1-phosphate + acetyl-CoA = N-acetyl-alpha-D-glucosamine 1-phosphate + CoA + H(+). The enzyme catalyses N-acetyl-alpha-D-glucosamine 1-phosphate + UTP + H(+) = UDP-N-acetyl-alpha-D-glucosamine + diphosphate. The protein operates within nucleotide-sugar biosynthesis; UDP-N-acetyl-alpha-D-glucosamine biosynthesis; N-acetyl-alpha-D-glucosamine 1-phosphate from alpha-D-glucosamine 6-phosphate (route II): step 2/2. Its pathway is nucleotide-sugar biosynthesis; UDP-N-acetyl-alpha-D-glucosamine biosynthesis; UDP-N-acetyl-alpha-D-glucosamine from N-acetyl-alpha-D-glucosamine 1-phosphate: step 1/1. It functions in the pathway bacterial outer membrane biogenesis; LPS lipid A biosynthesis. Functionally, catalyzes the last two sequential reactions in the de novo biosynthetic pathway for UDP-N-acetylglucosamine (UDP-GlcNAc). The C-terminal domain catalyzes the transfer of acetyl group from acetyl coenzyme A to glucosamine-1-phosphate (GlcN-1-P) to produce N-acetylglucosamine-1-phosphate (GlcNAc-1-P), which is converted into UDP-GlcNAc by the transfer of uridine 5-monophosphate (from uridine 5-triphosphate), a reaction catalyzed by the N-terminal domain. This is Bifunctional protein GlmU from Deinococcus geothermalis (strain DSM 11300 / CIP 105573 / AG-3a).